Reading from the N-terminus, the 886-residue chain is Isoleucine--tRNA ligase (886 aa).

The 'HIGH' region signature appears at 60–70 (PYANGDIHIGH). E546 is an L-isoleucyl-5'-AMP binding site. A 'KMSKS' region motif is present at residues 587–591 (KMSKS). K590 provides a ligand contact to ATP. Positions 856, 859, 870, and 873 each coordinate Zn(2+).

The protein belongs to the class-I aminoacyl-tRNA synthetase family. IleS type 1 subfamily. In terms of assembly, monomer. The cofactor is Zn(2+).

Its subcellular location is the cytoplasm. It catalyses the reaction tRNA(Ile) + L-isoleucine + ATP = L-isoleucyl-tRNA(Ile) + AMP + diphosphate. In terms of biological role, catalyzes the attachment of isoleucine to tRNA(Ile). As IleRS can inadvertently accommodate and process structurally similar amino acids such as valine, to avoid such errors it has two additional distinct tRNA(Ile)-dependent editing activities. One activity is designated as 'pretransfer' editing and involves the hydrolysis of activated Val-AMP. The other activity is designated 'posttransfer' editing and involves deacylation of mischarged Val-tRNA(Ile). This chain is Isoleucine--tRNA ligase, found in Mesomycoplasma hyopneumoniae (strain J / ATCC 25934 / NCTC 10110) (Mycoplasma hyopneumoniae).